The sequence spans 344 residues: Phenylalanine--tRNA ligase alpha subunit (344 aa).

Glu269 contacts Mg(2+).

It belongs to the class-II aminoacyl-tRNA synthetase family. Phe-tRNA synthetase alpha subunit type 1 subfamily. Tetramer of two alpha and two beta subunits. It depends on Mg(2+) as a cofactor.

It is found in the cytoplasm. The enzyme catalyses tRNA(Phe) + L-phenylalanine + ATP = L-phenylalanyl-tRNA(Phe) + AMP + diphosphate + H(+). In Ralstonia nicotianae (strain ATCC BAA-1114 / GMI1000) (Ralstonia solanacearum), this protein is Phenylalanine--tRNA ligase alpha subunit.